Here is a 100-residue protein sequence, read N- to C-terminus: Nucleoid-associated protein jhp_0031 (100 aa).

Belongs to the YbaB/EbfC family. As to quaternary structure, homodimer.

It is found in the cytoplasm. It localises to the nucleoid. Functionally, binds to DNA and alters its conformation. May be involved in regulation of gene expression, nucleoid organization and DNA protection. This is Nucleoid-associated protein jhp_0031 from Helicobacter pylori (strain J99 / ATCC 700824) (Campylobacter pylori J99).